The primary structure comprises 146 residues: Aminoglycoside N(6')-acetyltransferase type 1 (146 aa).

Residues 1 to 146 (MNIMPVSESL…RVVYFKKHIG (146 aa)) form the N-acetyltransferase domain. The substrate site is built by W22, H25, Y66, and E79. 81–83 (IYV) is a binding site for acetyl-CoA. D115 is a binding site for substrate. N120 serves as a coordination point for acetyl-CoA. E136 lines the substrate pocket.

In terms of assembly, homodimer.

The enzyme catalyses kanamycin B + acetyl-CoA = N(6')-acetylkanamycin B + CoA + H(+). In terms of biological role, catalyzes the transfer of an acetyl group from acetyl-CoA to the 6'-amino group of aminoglycoside molecules conferring resistance to antibiotics containing the purpurosamine ring including amikacin, kanamycin, tobramycin and netilmicin. The sequence is that of Aminoglycoside N(6')-acetyltransferase type 1 from Acinetobacter genomosp. 13.